The chain runs to 2109 residues: Nonribosomal peptide synthetase sidE (2109 aa).

The tract at residues 31–512 (LTPPSPPCLV…QNGKVDFRAI (482 aa)) is adenylation 1. In terms of domain architecture, Carrier 1 spans 537–613 (AGLSETASKI…EIADTVQLDS (77 aa)). O-(pantetheine 4'-phosphoryl)serine is present on serine 574. Residues 646-908 (DAYPVTALQE…LAVVPYAIAI (263 aa)) form a condensation 1 region. An adenylation 2 region spans residues 1058–1555 (RTLNGQFEAT…GKANRKQLKA (498 aa)). Residues 1584–1660 (PLASETQKVL…AMADQLKGES (77 aa)) enclose the Carrier 2 domain. Serine 1621 is modified (O-(pantetheine 4'-phosphoryl)serine). The segment at 1695-1968 (YPCPPGQAEF…NFLPMRSKVD (274 aa)) is condensation 2.

Belongs to the NRP synthetase family.

The protein operates within siderophore biosynthesis. Nonribosomal peptide synthetase; part of the siderophore biosynthetic pathway. Aspergillus fumigatus produces four types of siderophores, low-molecular-mass iron chelators, including excreted fusarinine C (FsC) and triacetylfusarinine C (TAFC) for iron uptake and intacellular ferricrocin (FC) for hyphal and hydroxyferricrocin (HFC) for conidial iron distribution and storage. TAFC consists of three N(2)-acetyl-N(5)-anhydromevalonyl-N(5)-hydroxyornithine residues cyclically linked by ester bonds; FC is a cyclic hexapeptide with the structure Gly-Ser-Gly-(N(5)-acetyl-N(5)-hydroxyornithine)x3. The biosynthesis of all four siderophores depends on the hydroxylation of ornithine, catalyzed by the monooxygenase sidA. Subsequently, the pathways for biosynthesis of extra- and intracellular siderophores split. For biosynthesis of extracellular siderophores, the transacylase sidF transfers anhydromevalonyl to N(5)-hydroxyornithine. The required anhydromevalonyl-CoA moiety is derived from mevalonate by CoA ligation and dehydration catalyzed by sidI and sidH respectively. The acetylation of N(5)-hydroxyornithine for FC biosynthesis involves the constitutively expressed sidL. FC is hydroxylated to HFC by an as yet uncharacterized enzyme during conidiation. Assembly of fusarinine C (FsC) and FC is catalyzed by two different nonribosomal peptide synthetases (NRPS), sidD and sidC respectively. Subsequently, sidG catalyzes N2-acetylation of FsC for forming TAFC. Both extra- and intracellular siderophores are crucial for growth during iron limitation and virulence. This chain is Nonribosomal peptide synthetase sidE, found in Aspergillus fumigatus (strain ATCC MYA-4609 / CBS 101355 / FGSC A1100 / Af293) (Neosartorya fumigata).